The following is a 171-amino-acid chain: Protein ups1 homolog (171 aa).

The required for mitochondrial targeting stretch occupies residues 1–79 (MTAICTDKTE…LNVNKSYILE (79 aa)). One can recognise a PRELI/MSF1 domain in the interval 2–171 (TAICTDKTEL…YVIQQKFQPS (170 aa)).

Its subcellular location is the mitochondrion inner membrane. The protein resides in the mitochondrion intermembrane space. Its function is as follows. Required for maintenance of normal mitochondrial morphology as well as PCP1-dependent processing of MGM1. In Schizosaccharomyces pombe (strain 972 / ATCC 24843) (Fission yeast), this protein is Protein ups1 homolog.